Reading from the N-terminus, the 3948-residue chain is Equisetin synthetase eqxS (3948 aa).

In terms of domain architecture, Ketosynthase family 3 (KS3) spans 4–438 (SEPIAVIGSA…GTNAHAIIEA (435 aa)). Residues Cys177, His316, and His358 each act as for beta-ketoacyl synthase activity in the active site. A malonyl-CoA:ACP transacylase (MAT) domain region spans residues 543–847 (IFTGQGTQWP…DTIEAISEGR (305 aa)). Positions 931-1066 (HPLLGRRCHD…AQIKASLGAP (136 aa)) are N-terminal hotdog fold. Residues 931–1233 (HPLLGRRCHD…MELVPFSPAT (303 aa)) are dehydratase (DH) domain. A PKS/mFAS DH domain is found at 931–1235 (HPLLGRRCHD…LVPFSPATPA (305 aa)). Residue His964 is the Proton acceptor; for dehydratase activity of the active site. The segment at 1081–1235 (LRPVSVDRFY…LVPFSPATPA (155 aa)) is C-terminal hotdog fold. Asp1141 (proton donor; for dehydratase activity) is an active-site residue. Residues 1376-1574 (MLQDVYEQGF…GIDTTTPPVH (199 aa)) are methyltransferase (MT) domain. Residues 2105–2277 (TFLLVGLTGE…VAASSIDISS (173 aa)) form a ketoreductase (KR) domain region. The Carrier 1 domain maps to 2389-2464 (AIIKESFIVR…DLVDECLDLL (76 aa)). An O-(pantetheine 4'-phosphoryl)serine modification is found at Ser2424. The interval 2480–2553 (QAAKPTTVIP…NSTDILAPPR (74 aa)) is disordered. Composition is skewed to polar residues over residues 2487 to 2505 (VIPQ…QGTS) and 2513 to 2528 (GSDS…LTSW). Residues 2529-2541 (DRQDSSPPDKSDD) show a composition bias toward basic and acidic residues. Residues 2564–2991 (SYGQAGFWFL…IRGSDKTVDA (428 aa)) are condensation (C) domain. The tract at residues 3026-3424 (QVIQDNPDNI…DGLLFCDGRL (399 aa)) is adenylation (A) (KR) domain. The Carrier 2 domain occupies 3540 to 3617 (EILTPSEQRL…AMAGVLEDCG (78 aa)). O-(pantetheine 4'-phosphoryl)serine is present on Ser3577. The tract at residues 3653–3870 (LTGSSGYLGR…MPVNEVVEAI (218 aa)) is reductase (RED) domain.

It in the C-terminal section; belongs to the NRP synthetase family.

It catalyses the reaction L-serine + 7 malonyl-CoA + acetyl-CoA + 2 S-adenosyl-L-methionine + ATP + 8 NADPH + 11 H(+) = (5S)-3-[(2E,6R,8E,10E,12E)-2,6-dimethyltetradeca-2,8,10,12-tetraenoyl]-5-(hydroxymethyl)pyrrolidine-2,4-dione + AMP + 2 S-adenosyl-L-homocysteine + 7 CO2 + diphosphate + 8 NADP(+) + 8 CoA + 6 H2O. Its pathway is mycotoxin biosynthesis. Hybrid PKS-NRPS synthetase; part of the gene cluster that mediates the biosynthesis of equisetin, a trans-fused decalin-containing tetramic acid with antimicrobial activity. The PKS module of eqxS together with the enoylreductase eqxC catalyze the formation of the polyketide unit which is then conjugated to L-serine by the condensation domain of the eqxS NRPS module. Activity of the Dieckmann cyclase domain (RED) results in release of the Dieckmann product intermediate. Diels-Alderase eqx3 is involved in endo-selective Diels-Alder cycloaddition to form the decalin ring, leading to the production of N-desmethylequisetin also called trichosetin. Subsequent N-methylation is carried out by eqxD to give equisetin. This Fusarium heterosporum protein is Equisetin synthetase eqxS.